The primary structure comprises 435 residues: Light-independent protochlorophyllide reductase subunit N (435 aa).

Positions 23, 48, and 108 each coordinate [4Fe-4S] cluster.

It belongs to the BchN/ChlN family. In terms of assembly, protochlorophyllide reductase is composed of three subunits; ChlL, ChlN and ChlB. Forms a heterotetramer of two ChlB and two ChlN subunits. It depends on [4Fe-4S] cluster as a cofactor.

The protein resides in the plastid. It is found in the chloroplast. The catalysed reaction is chlorophyllide a + oxidized 2[4Fe-4S]-[ferredoxin] + 2 ADP + 2 phosphate = protochlorophyllide a + reduced 2[4Fe-4S]-[ferredoxin] + 2 ATP + 2 H2O. The protein operates within porphyrin-containing compound metabolism; chlorophyll biosynthesis (light-independent). Functionally, component of the dark-operative protochlorophyllide reductase (DPOR) that uses Mg-ATP and reduced ferredoxin to reduce ring D of protochlorophyllide (Pchlide) to form chlorophyllide a (Chlide). This reaction is light-independent. The NB-protein (ChlN-ChlB) is the catalytic component of the complex. This Auxenochlorella protothecoides (Green microalga) protein is Light-independent protochlorophyllide reductase subunit N.